The following is a 25-amino-acid chain: Ocellatin-1 (25 aa).

Residue valine 25 is modified to Valine amide.

Expressed by the skin dorsal glands.

The protein localises to the secreted. Functionally, has hemolytic activity against human erythrocytes and antibacterial activity against the Gram-negative bacterium E.coli. This chain is Ocellatin-1, found in Leptodactylus ocellatus (Argus frog).